A 227-amino-acid polypeptide reads, in one-letter code: Uracil-DNA glycosylase 2 (227 aa).

The active-site Proton acceptor is the Asp67.

It belongs to the uracil-DNA glycosylase (UDG) superfamily. UNG family.

It localises to the cytoplasm. It carries out the reaction Hydrolyzes single-stranded DNA or mismatched double-stranded DNA and polynucleotides, releasing free uracil.. Excises uracil residues from the DNA which can arise as a result of misincorporation of dUMP residues by DNA polymerase or due to deamination of cytosine. The polypeptide is Uracil-DNA glycosylase 2 (ung2) (Streptomyces avermitilis (strain ATCC 31267 / DSM 46492 / JCM 5070 / NBRC 14893 / NCIMB 12804 / NRRL 8165 / MA-4680)).